Consider the following 276-residue polypeptide: Tryptophan synthase alpha chain (276 aa).

Residues Glu-49 and Asp-60 each act as proton acceptor in the active site.

This sequence belongs to the TrpA family. Tetramer of two alpha and two beta chains.

The enzyme catalyses (1S,2R)-1-C-(indol-3-yl)glycerol 3-phosphate + L-serine = D-glyceraldehyde 3-phosphate + L-tryptophan + H2O. It functions in the pathway amino-acid biosynthesis; L-tryptophan biosynthesis; L-tryptophan from chorismate: step 5/5. Its function is as follows. The alpha subunit is responsible for the aldol cleavage of indoleglycerol phosphate to indole and glyceraldehyde 3-phosphate. This is Tryptophan synthase alpha chain from Corynebacterium aurimucosum (strain ATCC 700975 / DSM 44827 / CIP 107346 / CN-1) (Corynebacterium nigricans).